The following is a 358-amino-acid chain: Photosystem II protein D1 1 (358 aa).

The next 3 helical transmembrane spans lie at 28 to 45 (YVGW…AATI), 117 to 132 (HFLI…QWEL), and 141 to 155 (WICV…AAFA). H117 lines the chlorophyll a pocket. Residue Y125 coordinates pheophytin a. 2 residues coordinate [CaMn4O5] cluster: D169 and E188. A helical membrane pass occupies residues 196 to 217 (FHMLGVAGVFGGSLFSAMHGSL). H197 lines the chlorophyll a pocket. A quinone contacts are provided by residues H214 and 263 to 264 (SF). H214 is a binding site for Fe cation. Position 271 (H271) interacts with Fe cation. A helical membrane pass occupies residues 273-287 (FLGAWPVIGIWFTSM). Residues H331, E332, D341, and A343 each contribute to the [CaMn4O5] cluster site. Residues 344-358 (AAESTPVALQAPAIG) constitute a propeptide that is removed on maturation.

The protein belongs to the reaction center PufL/M/PsbA/D family. PSII is composed of 1 copy each of membrane proteins PsbA, PsbB, PsbC, PsbD, PsbE, PsbF, PsbH, PsbI, PsbJ, PsbK, PsbL, PsbM, PsbT, PsbX, PsbY, PsbZ, Psb30/Ycf12, peripheral proteins PsbO, CyanoQ (PsbQ), PsbU, PsbV and a large number of cofactors. It forms dimeric complexes. It depends on The D1/D2 heterodimer binds P680, chlorophylls that are the primary electron donor of PSII, and subsequent electron acceptors. It shares a non-heme iron and each subunit binds pheophytin, quinone, additional chlorophylls, carotenoids and lipids. D1 provides most of the ligands for the Mn4-Ca-O5 cluster of the oxygen-evolving complex (OEC). There is also a Cl(-1) ion associated with D1 and D2, which is required for oxygen evolution. The PSII complex binds additional chlorophylls, carotenoids and specific lipids. as a cofactor. Post-translationally, tyr-160 forms a radical intermediate that is referred to as redox-active TyrZ, YZ or Y-Z. C-terminally processed by CtpA; processing is essential to allow assembly of the oxygen-evolving complex and thus photosynthetic growth.

Its subcellular location is the cellular thylakoid membrane. The enzyme catalyses 2 a plastoquinone + 4 hnu + 2 H2O = 2 a plastoquinol + O2. In terms of biological role, photosystem II (PSII) is a light-driven water:plastoquinone oxidoreductase that uses light energy to abstract electrons from H(2)O, generating O(2) and a proton gradient subsequently used for ATP formation. It consists of a core antenna complex that captures photons, and an electron transfer chain that converts photonic excitation into a charge separation. The D1/D2 (PsbA/PsbD) reaction center heterodimer binds P680, the primary electron donor of PSII as well as several subsequent electron acceptors. This Synechococcus sp. (strain CC9902) protein is Photosystem II protein D1 1.